Reading from the N-terminus, the 193-residue chain is BH3-interacting domain death agonist (193 aa).

Positions isoleucine 87–glutamine 101 match the BH3 motif.

As to quaternary structure, forms heterodimers either with the pro-apoptotic protein BAX or the anti-apoptotic protein Bcl-2.

The protein localises to the cytoplasm. It localises to the mitochondrion outer membrane. Its function is as follows. Induces caspases and apoptosis. Counters the protective effect of Bcl-2. This chain is BH3-interacting domain death agonist (BID), found in Gallus gallus (Chicken).